The sequence spans 362 residues: 3-dehydroquinate synthase (362 aa).

NAD(+)-binding positions include 71 to 76, 105 to 109, 129 to 130, lysine 142, lysine 151, and 169 to 172; these read DGEQYK, GVIGD, TT, and CLQT. Zn(2+)-binding residues include glutamate 184, histidine 247, and histidine 264.

It belongs to the sugar phosphate cyclases superfamily. Dehydroquinate synthase family. Requires Co(2+) as cofactor. It depends on Zn(2+) as a cofactor. The cofactor is NAD(+).

It is found in the cytoplasm. The catalysed reaction is 7-phospho-2-dehydro-3-deoxy-D-arabino-heptonate = 3-dehydroquinate + phosphate. It participates in metabolic intermediate biosynthesis; chorismate biosynthesis; chorismate from D-erythrose 4-phosphate and phosphoenolpyruvate: step 2/7. In terms of biological role, catalyzes the conversion of 3-deoxy-D-arabino-heptulosonate 7-phosphate (DAHP) to dehydroquinate (DHQ). The protein is 3-dehydroquinate synthase of Cronobacter sakazakii (strain ATCC BAA-894) (Enterobacter sakazakii).